A 290-amino-acid polypeptide reads, in one-letter code: Putative OX-2 membrane glycoprotein homolog (290 aa).

The first 17 residues, 1 to 17 (MSSLMLRLLPLLYIISA), serve as a signal peptide directing secretion. The Extracellular portion of the chain corresponds to 18–267 (HFVLHPETSP…SDETVFTWTV (250 aa)). One can recognise an Ig-like V-type domain in the interval 23-135 (PETSPSLIYE…TFTVDNEKTS (113 aa)). The cysteines at positions 41 and 125 are disulfide-linked. N71, N104, N194, and N202 each carry an N-linked (GlcNAc...) asparagine; by host glycan. An Ig-like C2-type domain is found at 146 to 236 (PIVVLYFRYL…TNQKASALVT (91 aa)). The helical transmembrane segment at 268-288 (PLILILISVIVLLISVCIVAF) threads the bilayer. Over 289–290 (KS) the chain is Cytoplasmic.

Its subcellular location is the membrane. This Homo sapiens (Human) protein is Putative OX-2 membrane glycoprotein homolog (U85).